A 201-amino-acid chain; its full sequence is Probable molybdenum cofactor guanylyltransferase (201 aa).

GTP-binding positions include 16 to 18, lysine 28, aspartate 75, and aspartate 107; that span reads LAG. Aspartate 107 is a Mg(2+) binding site.

This sequence belongs to the MobA family. Mg(2+) is required as a cofactor.

It is found in the cytoplasm. It catalyses the reaction Mo-molybdopterin + GTP + H(+) = Mo-molybdopterin guanine dinucleotide + diphosphate. In terms of biological role, transfers a GMP moiety from GTP to Mo-molybdopterin (Mo-MPT) cofactor (Moco or molybdenum cofactor) to form Mo-molybdopterin guanine dinucleotide (Mo-MGD) cofactor. The chain is Probable molybdenum cofactor guanylyltransferase from Mycobacterium ulcerans (strain Agy99).